We begin with the raw amino-acid sequence, 95 residues long: Co-chaperonin GroES (95 aa).

It belongs to the GroES chaperonin family. As to quaternary structure, heptamer of 7 subunits arranged in a ring. Interacts with the chaperonin GroEL.

The protein localises to the cytoplasm. Together with the chaperonin GroEL, plays an essential role in assisting protein folding. The GroEL-GroES system forms a nano-cage that allows encapsulation of the non-native substrate proteins and provides a physical environment optimized to promote and accelerate protein folding. GroES binds to the apical surface of the GroEL ring, thereby capping the opening of the GroEL channel. The sequence is that of Co-chaperonin GroES from Chlorobium phaeobacteroides (strain BS1).